The chain runs to 224 residues: Uracil-DNA glycosylase (224 aa).

Catalysis depends on Asp-65, which acts as the Proton acceptor.

It belongs to the uracil-DNA glycosylase (UDG) superfamily. UNG family.

The protein localises to the cytoplasm. It carries out the reaction Hydrolyzes single-stranded DNA or mismatched double-stranded DNA and polynucleotides, releasing free uracil.. Functionally, excises uracil residues from the DNA which can arise as a result of misincorporation of dUMP residues by DNA polymerase or due to deamination of cytosine. The sequence is that of Uracil-DNA glycosylase from Buchnera aphidicola subsp. Baizongia pistaciae (strain Bp).